Reading from the N-terminus, the 476-residue chain is MATPANQNGRITQVIGAVVDVQFEGHLPAILNAIETKNGNNRLVLEVAQHLGESTVRTIAMDTTEGLVRGQEVTDTGSPIMVPVGLGTLGRIMNVIGEPVDEQGPVANEGLRPIHAEAPLYTDQSTEAEILVTGIKVVDLLAPYAKGGKIGLFGGAGVGKTVLIQELINNVAKAHGGYSVFAGVGERTREGNDLYHEFIESGVNKKGGGEGSKCALVYGQMNEPPGARARVALSGLTVAEHFRDQGQDVLFFVDNIFRFTQAGSEVSALLGRIPSAVGYQPTLATDMGALQERITTTHKGSITSVQAIYVPADDLTDPAPATSFAHLDATTVLNRAISEKGIYPAVDPLDSTSRMLSPLIVGEEHYQTARMVQQVLQKYKSLQDIIAILGMDELSEEDKIAVARARKIERFLSQPFFVAEIFTGSPGKFVDLADTIKGFRAICEGKYDHLPEAAFYMVGTIEEAVEKGKKLAAEAA.

Residue 154-161 participates in ATP binding; the sequence is GGAGVGKT.

Belongs to the ATPase alpha/beta chains family. F-type ATPases have 2 components, CF(1) - the catalytic core - and CF(0) - the membrane proton channel. CF(1) has five subunits: alpha(3), beta(3), gamma(1), delta(1), epsilon(1). CF(0) has four main subunits: a(1), b(1), b'(1) and c(9-12).

It is found in the cell inner membrane. The enzyme catalyses ATP + H2O + 4 H(+)(in) = ADP + phosphate + 5 H(+)(out). Its function is as follows. Produces ATP from ADP in the presence of a proton gradient across the membrane. The catalytic sites are hosted primarily by the beta subunits. The sequence is that of ATP synthase subunit beta from Rhodopseudomonas palustris (strain BisA53).